Here is a 450-residue protein sequence, read N- to C-terminus: Signal recognition particle 54 kDa protein (450 aa).

GTP-binding positions include 107–114, 188–192, and 247–250; these read GIQGSGKT, DTAGR, and TKLD.

It belongs to the GTP-binding SRP family. SRP54 subfamily. Part of the signal recognition particle protein translocation system, which is composed of SRP and FtsY. Archaeal SRP consists of a 7S RNA molecule of 300 nucleotides and two protein subunits: SRP54 and SRP19.

Its subcellular location is the cytoplasm. It carries out the reaction GTP + H2O = GDP + phosphate + H(+). Its function is as follows. Involved in targeting and insertion of nascent membrane proteins into the cytoplasmic membrane. Binds to the hydrophobic signal sequence of the ribosome-nascent chain (RNC) as it emerges from the ribosomes. The SRP-RNC complex is then targeted to the cytoplasmic membrane where it interacts with the SRP receptor FtsY. In Methanococcus vannielii (strain ATCC 35089 / DSM 1224 / JCM 13029 / OCM 148 / SB), this protein is Signal recognition particle 54 kDa protein.